The sequence spans 402 residues: Arginine biosynthesis bifunctional protein ArgJ (402 aa).

Substrate-binding residues include Thr149, Lys175, Thr186, Glu266, Asn397, and Thr402. Thr186 (nucleophile) is an active-site residue.

Belongs to the ArgJ family. Heterotetramer of two alpha and two beta chains.

It localises to the cytoplasm. The catalysed reaction is N(2)-acetyl-L-ornithine + L-glutamate = N-acetyl-L-glutamate + L-ornithine. It catalyses the reaction L-glutamate + acetyl-CoA = N-acetyl-L-glutamate + CoA + H(+). It functions in the pathway amino-acid biosynthesis; L-arginine biosynthesis; L-ornithine and N-acetyl-L-glutamate from L-glutamate and N(2)-acetyl-L-ornithine (cyclic): step 1/1. Its pathway is amino-acid biosynthesis; L-arginine biosynthesis; N(2)-acetyl-L-ornithine from L-glutamate: step 1/4. Its function is as follows. Catalyzes two activities which are involved in the cyclic version of arginine biosynthesis: the synthesis of N-acetylglutamate from glutamate and acetyl-CoA as the acetyl donor, and of ornithine by transacetylation between N(2)-acetylornithine and glutamate. This Prochlorococcus marinus subsp. pastoris (strain CCMP1986 / NIES-2087 / MED4) protein is Arginine biosynthesis bifunctional protein ArgJ.